The chain runs to 191 residues: Fe/S biogenesis protein NfuA (191 aa).

Positions 149 and 152 each coordinate [4Fe-4S] cluster.

It belongs to the NfuA family. In terms of assembly, homodimer. [4Fe-4S] cluster serves as cofactor.

Functionally, involved in iron-sulfur cluster biogenesis. Binds a 4Fe-4S cluster, can transfer this cluster to apoproteins, and thereby intervenes in the maturation of Fe/S proteins. Could also act as a scaffold/chaperone for damaged Fe/S proteins. This is Fe/S biogenesis protein NfuA from Cronobacter sakazakii (strain ATCC BAA-894) (Enterobacter sakazakii).